The chain runs to 278 residues: Bicarbonate transport ATP-binding protein CmpD (278 aa).

In terms of domain architecture, ABC transporter spans leucine 21–glutamate 254. ATP is bound at residue glycine 57–serine 64.

Belongs to the ABC transporter superfamily. Nitrate/nitrite/cyanate uptake transporter (NitT) (TC 3.A.1.16) family. As to quaternary structure, the complex is composed of two ATP-binding proteins (CmpC and CmpD), a transmembrane protein (CmpB) and a solute-binding protein (CmpA).

The protein localises to the cell inner membrane. Functionally, part of the ABC transporter complex CmpABCD involved in bicarbonate transport. Responsible for energy coupling to the transport system. This chain is Bicarbonate transport ATP-binding protein CmpD (cmpD), found in Synechococcus elongatus (strain ATCC 33912 / PCC 7942 / FACHB-805) (Anacystis nidulans R2).